We begin with the raw amino-acid sequence, 231 residues long: Small ribosomal subunit protein uS3 (231 aa).

One can recognise a KH type-2 domain in the interval 17–86; that stretch reads VEKYLTKELK…SPQIEVQQVQ (70 aa).

This sequence belongs to the universal ribosomal protein uS3 family. As to quaternary structure, part of the 30S ribosomal subunit.

In terms of biological role, binds the lower part of the 30S subunit head. The polypeptide is Small ribosomal subunit protein uS3 (Methanoregula boonei (strain DSM 21154 / JCM 14090 / 6A8)).